A 197-amino-acid chain; its full sequence is Nucleoside triphosphate pyrophosphatase (197 aa).

The Proton acceptor role is filled by aspartate 71.

Belongs to the Maf family. A divalent metal cation is required as a cofactor.

The protein localises to the cytoplasm. The catalysed reaction is a ribonucleoside 5'-triphosphate + H2O = a ribonucleoside 5'-phosphate + diphosphate + H(+). It carries out the reaction a 2'-deoxyribonucleoside 5'-triphosphate + H2O = a 2'-deoxyribonucleoside 5'-phosphate + diphosphate + H(+). Nucleoside triphosphate pyrophosphatase. May have a dual role in cell division arrest and in preventing the incorporation of modified nucleotides into cellular nucleic acids. In Nostoc punctiforme (strain ATCC 29133 / PCC 73102), this protein is Nucleoside triphosphate pyrophosphatase.